The primary structure comprises 1098 residues: Ran-binding protein 16 (1098 aa).

It belongs to the exportin family. In terms of assembly, binds to nucleoporins and the GTP-bound form of Ran.

It localises to the cytoplasm. The protein localises to the nucleus. Functionally, may function as a nuclear transport receptor. This chain is Ran-binding protein 16 (Ranbp16), found in Drosophila melanogaster (Fruit fly).